A 1721-amino-acid polypeptide reads, in one-letter code: MAGAWLRWGLLLWAGLLASSAHGRLRRITYVVHPGPGLAAGALPLSGPPRSRTFNVALNARYSRSSAAAGAPSRASPGVPSERTRRTSKPGGAALQGLRPPPPPPPEPARPAVPGGQLHPNPGGHPAAAPFTKQGRQVVRSKVPQETQSGGGSRLQVHQKQQLQGVNVCGGRCCHGWSKAPGSQRCTKPSCVPPCQNGGMCLRPQLCVCKPGTKGKACETIAAQDTSSPVFGGQSPGAASSWGPPEQAAKHTSSKKADTLPRVSPVAQMTLTLKPKPSVGLPQQIHSQVTPLSSQSVVIHHGQTQEYVLKPKYFPAQKGISGEQSTEGSFPLRYVQDQVAAPFQLSNHTGRIKVVFTPSICKVTCTKGSCQNSCEKGNTTTLISENGHAADTLTATNFRVVICHLPCMNGGQCSSRDKCQCPPNFTGKLCQIPVHGASVPKLYQHSQQPGKALGTHVIHSTHTLPLTVTSQQGVKVKFPPNIVNIHVKHPPEASVQIHQVSRIDGPTGQKTKEAQPGQSQVSYQGLPVQKTQTIHSTYSHQQVIPHVYPVAAKTQLGRCFQETIGSQCGKALPGLSKQEDCCGTVGTSWGFNKCQKCPKKPSYHGYNQMMECLPGYKRVNNTFCQDINECQLQGVCPNGECLNTMGSYRCTCKIGFGPDPTFSSCVPDPPVISEEKGPCYRLVSSGRQCMHPLSVHLTKQLCCCSVGKAWGPHCEKCPLPGTAAFKEICPGGMGYTVSGVHRRRPIHHHVGKGPVFVKPKNTQPVAKSTHPPPLPAKEEPVEALTFSREHGPGVAEPEVATAPPEKEIPSLDQEKTKLEPGQPQLSPGISTIHLHPQFPVVIEKTSPPVPVEVAPEASTSSASQVIAPTQVTEINECTVNPDICGAGHCINLPVRYTCICYEGYRFSEQQRKCVDIDECTQVQHLCSQGRCENTEGSFLCICPAGFMASEEGTNCIDVDECLRPDVCGEGHCVNTVGAFRCEYCDSGYRMTQRGRCEDIDECLNPSTCPDEQCVNSPGSYQCVPCTEGFRGWNGQCLDVDECLEPNVCANGDCSNLEGSYMCSCHKGYTRTPDHKHCRDIDECQQGNLCVNGQCKNTEGSFRCTCGQGYQLSAAKDQCEDIDECQHRHLCAHGQCRNTEGSFQCVCDQGYRASGLGDHCEDINECLEDKSVCQRGDCINTAGSYDCTCPDGFQLDDNKTCQDINECEHPGLCGPQGECLNTEGSFHCVCQQGFSISADGRTCEDIDECVNNTVCDSHGFCDNTAGSFRCLCYQGFQAPQDGQGCVDVNECELLSGVCGEAFCENVEGSFLCVCADENQEYSPMTGQCRSRTSTDLDVDVDQPKEEKKECYYNLNDASLCDNVLAPNVTKQECCCTSGVGWGDNCEIFPCPVLGTAEFTEMCPKGKGFVPAGESSSEAGGENYKDADECLLFGQEICKNGFCLNTRPGYECYCKQGTYYDPVKLQCFDMDECQDPSSCIDGQCVNTEGSYNCFCTHPMVLDASEKRCIRPAESNEQIEETDVYQDLCWEHLSDEYVCSRPLVGKQTTYTECCCLYGEAWGMQCALCPLKDSDDYAQLCNIPVTGRRQPYGRDALVDFSEQYTPEADPYFIQDRFLNSFEELQAEECGILNGCENGRCVRVQEGYTCDCFDGYHLDTAKMTCVDVNECDELNNRMSLCKNAKCINTDGSYKCLCLPGYVPSDKPNYCTPLNTALNLEKDSDLE.

An N-terminal signal peptide occupies residues 1-23 (MAGAWLRWGLLLWAGLLASSAHG). The segment covering 64 to 81 (RSSAAAGAPSRASPGVPS) has biased composition (low complexity). The interval 64 to 158 (RSSAAAGAPS…SGGGSRLQVH (95 aa)) is disordered. The segment covering 99–111 (RPPPPPPPEPARP) has biased composition (pro residues). Residues 112–130 (AVPGGQLHPNPGGHPAAAP) are compositionally biased toward low complexity. In terms of domain architecture, EGF-like 1 spans 187–219 (TKPSCVPPCQNGGMCLRPQLCVCKPGTKGKACE). Disulfide bonds link Cys191/Cys201, Cys195/Cys207, and Cys209/Cys218. Residues 228 to 259 (SPVFGGQSPGAASSWGPPEQAAKHTSSKKADT) are disordered. N-linked (GlcNAc...) asparagine glycans are attached at residues Asn347 and Asn378. Residues 399–431 (RVVICHLPCMNGGQCSSRDKCQCPPNFTGKLCQ) enclose the EGF-like 2 domain. Disulfide bonds link Cys403/Cys413, Cys407/Cys419, Cys421/Cys430, Cys559/Cys581, Cys568/Cys594, and Cys582/Cys597. The N-linked (GlcNAc...) asparagine glycan is linked to Asn424. Residues 557-609 (GRCFQETIGSQCGKALPGLSKQEDCCGTVGTSWGFNKCQKCPKKPSYHGYNQM) form the TB 1 domain. The N-linked (GlcNAc...) asparagine glycan is linked to Asn620. In terms of domain architecture, EGF-like 3; calcium-binding spans 626-663 (DINECQLQGVCPNGECLNTMGSYRCTCKIGFGPDPTFS). Intrachain disulfides connect Cys630–Cys641, Cys636–Cys650, Cys652–Cys665, Cys679–Cys702, Cys689–Cys714, Cys703–Cys717, and Cys704–Cys729. Ser647 carries an O-linked (Glc) serine glycan. The TB 2 domain occupies 677-729 (GPCYRLVSSGRQCMHPLSVHLTKQLCCCSVGKAWGPHCEKCPLPGTAAFKEIC). Residues 750–811 (VGKGPVFVKP…APPEKEIPSL (62 aa)) are disordered. 2 O-linked (GalNAc...) threonine glycosylation sites follow: Thr769 and Thr801. Residues 873–910 (EINECTVNPDICGAGHCINLPVRYTCICYEGYRFSEQQ) enclose the EGF-like 4; calcium-binding domain. 29 disulfides stabilise this stretch: Cys877/Cys889, Cys884/Cys898, Cys900/Cys913, Cys919/Cys931, Cys926/Cys940, Cys942/Cys955, Cys961/Cys972, Cys967/Cys981, Cys984/Cys996, Cys1002/Cys1013, Cys1008/Cys1022, Cys1025/Cys1036, Cys1042/Cys1053, Cys1048/Cys1062, Cys1064/Cys1077, Cys1083/Cys1094, Cys1089/Cys1103, Cys1105/Cys1118, Cys1124/Cys1135, Cys1130/Cys1144, Cys1146/Cys1159, Cys1165/Cys1177, Cys1172/Cys1186, Cys1188/Cys1200, Cys1206/Cys1218, Cys1212/Cys1227, Cys1229/Cys1242, Cys1248/Cys1260, and Cys1254/Cys1269. The EGF-like 5; calcium-binding domain maps to 915-956 (DIDECTQVQHLCSQGRCENTEGSFLCICPAGFMASEEGTNCI). Residue Ser937 is glycosylated (O-linked (Glc) serine). The EGF-like 6; calcium-binding domain occupies 957–997 (DVDECLRPDVCGEGHCVNTVGAFRCEYCDSGYRMTQRGRCE). Position 974 is a (3R)-3-hydroxyasparagine (Asn974). An EGF-like 7; calcium-binding domain is found at 998 to 1037 (DIDECLNPSTCPDEQCVNSPGSYQCVPCTEGFRGWNGQCL). An O-linked (Glc) serine glycan is attached at Ser1019. The EGF-like 8; calcium-binding domain maps to 1038–1078 (DVDECLEPNVCANGDCSNLEGSYMCSCHKGYTRTPDHKHCR). O-linked (Glc) serine glycosylation occurs at Ser1059. The region spanning 1079-1119 (DIDECQQGNLCVNGQCKNTEGSFRCTCGQGYQLSAAKDQCE) is the EGF-like 9; calcium-binding domain. The 41-residue stretch at 1120-1160 (DIDECQHRHLCAHGQCRNTEGSFQCVCDQGYRASGLGDHCE) folds into the EGF-like 10; calcium-binding domain. The residue at position 1137 (Asn1137) is a (3R)-3-hydroxyasparagine. O-linked (Glc) serine glycosylation is present at Ser1141. Positions 1161–1201 (DINECLEDKSVCQRGDCINTAGSYDCTCPDGFQLDDNKTCQ) constitute an EGF-like 11; calcium-binding domain. The short motif at 1174 to 1176 (RGD) is the Cell attachment site element. N-linked (GlcNAc...) asparagine glycosylation is present at Asn1197. The EGF-like 12; calcium-binding domain occupies 1202-1243 (DINECEHPGLCGPQGECLNTEGSFHCVCQQGFSISADGRTCE). Residue Ser1224 is glycosylated (O-linked (Glc) serine). Residues 1244–1281 (DIDECVNNTVCDSHGFCDNTAGSFRCLCYQGFQAPQDG) form the EGF-like 13; calcium-binding domain. A glycan (N-linked (GlcNAc...) asparagine) is linked at Asn1250. The 43-residue stretch at 1286–1328 (DVNECELLSGVCGEAFCENVEGSFLCVCADENQEYSPMTGQCR) folds into the EGF-like 14; calcium-binding domain. The interval 1344–1411 (EEKKECYYNL…PKGKGFVPAG (68 aa)) is 8-Cys3 region. The TB 3 domain maps to 1347-1401 (KECYYNLNDASLCDNVLAPNVTKQECCCTSGVGWGDNCEIFPCPVLGTAEFTEMC). Intrachain disulfides connect Cys1349–Cys1372, Cys1359–Cys1384, Cys1373–Cys1389, and Cys1374–Cys1401. Residue Asn1366 is glycosylated (N-linked (GlcNAc...) asparagine). Ser1414 is subject to Phosphoserine; by FAM20C. The EGF-like 15; calcium-binding domain occupies 1424-1466 (DADECLLFGQEICKNGFCLNTRPGYECYCKQGTYYDPVKLQCF). An EGF-like 16; calcium-binding domain is found at 1467–1503 (DMDECQDPSSCIDGQCVNTEGSYNCFCTHPMVLDASE). Intrachain disulfides connect Cys1471–Cys1482, Cys1477–Cys1491, Cys1526–Cys1550, Cys1536–Cys1562, Cys1551–Cys1565, and Cys1552–Cys1577. Ser1488 is a glycosylation site (O-linked (Glc) serine). Residues 1507–1721 (IRPAESNEQI…LNLEKDSDLE (215 aa)) form a C-terminal domain region. The TB 4 domain maps to 1524–1577 (DLCWEHLSDEYVCSRPLVGKQTTYTECCCLYGEAWGMQCALCPLKDSDDYAQLC). 2 positions are modified to phosphoserine: Ser1597 and Ser1616. Residues 1621-1657 (QAEECGILNGCENGRCVRVQEGYTCDCFDGYHLDTAK) enclose the EGF-like 17 domain. 5 disulfide bridges follow: Cys1625-Cys1636, Cys1631-Cys1645, Cys1666-Cys1681, Cys1676-Cys1690, and Cys1692-Cys1705. One can recognise an EGF-like 18; calcium-binding domain in the interval 1662-1706 (DVNECDELNNRMSLCKNAKCINTDGSYKCLCLPGYVPSDKPNYCT). O-linked (Glc) serine glycosylation occurs at Ser1687.

It belongs to the LTBP family. In terms of assembly, interacts with TGFB1; associates via disulfide bonds with the Latency-associated peptide chain (LAP) regulatory chain of TGFB1, leading to regulate activation of TGF-beta-1. LTBP1 does not bind directly to TGF-beta-1, the active chain of TGFB1. Interacts (via C-terminal domain) with FBN1 (via N-terminal domain). Interacts with FBN2. Interacts with ADAMTSL2. Interacts with EFEMP2. Contains hydroxylated asparagine residues. In terms of processing, isoform Short N-terminus is blocked. Post-translationally, two intrachain disulfide bonds from the TB3 domain are rearranged upon TGFB1 binding, and form interchain bonds with TGFB1 propeptide, anchoring it to the extracellular matrix. O-glycosylated on serine residues by POGLUT2 and POGLUT3. In terms of tissue distribution, expressed in the aorta (at protein level). Isoform Long: Expressed in fibroblasts.

Its subcellular location is the secreted. It is found in the extracellular space. The protein resides in the extracellular matrix. Key regulator of transforming growth factor beta (TGFB1, TGFB2 and TGFB3) that controls TGF-beta activation by maintaining it in a latent state during storage in extracellular space. Associates specifically via disulfide bonds with the Latency-associated peptide (LAP), which is the regulatory chain of TGF-beta, and regulates integrin-dependent activation of TGF-beta. Outcompeted by LRRC32/GARP for binding to LAP regulatory chain of TGF-beta. This is Latent-transforming growth factor beta-binding protein 1 from Homo sapiens (Human).